Here is a 182-residue protein sequence, read N- to C-terminus: Flavin prenyltransferase UbiX (182 aa).

FMN contacts are provided by residues 9-11 (GAS), serine 35, 86-89 (SIKT), and arginine 121. Residues tyrosine 151 and arginine 167 each coordinate dimethylallyl phosphate.

It belongs to the UbiX/PAD1 family.

The enzyme catalyses dimethylallyl phosphate + FMNH2 = prenylated FMNH2 + phosphate. Flavin prenyltransferase that catalyzes the synthesis of the prenylated FMN cofactor (prenyl-FMN) for 4-hydroxy-3-polyprenylbenzoic acid decarboxylase UbiD. The prenyltransferase is metal-independent and links a dimethylallyl moiety from dimethylallyl monophosphate (DMAP) to the flavin N5 and C6 atoms of FMN. This chain is Flavin prenyltransferase UbiX, found in Archaeoglobus fulgidus (strain ATCC 49558 / DSM 4304 / JCM 9628 / NBRC 100126 / VC-16).